A 103-amino-acid chain; its full sequence is Putative ribosomal RNA-processing protein 7 homolog B (103 aa).

The segment covering 1–19 (MEAYDQKIAEEEAKAKEEE) has biased composition (basic and acidic residues). Positions 1-25 (MEAYDQKIAEEEAKAKEEEGVPDEE) are disordered. Residues 71-100 (ESKMEHLAQLRKKFEEDKQRIELLRAQRKF) are a coiled coil.

The protein belongs to the RRP7 family.

In Homo sapiens (Human), this protein is Putative ribosomal RNA-processing protein 7 homolog B.